The chain runs to 901 residues: HTH-type transcriptional regulator MalT (901 aa).

Residue serine 39–threonine 46 participates in ATP binding. The region spanning glutamate 829 to leucine 894 is the HTH luxR-type domain. The segment at residues asparagine 853 to arginine 872 is a DNA-binding region (H-T-H motif).

The protein belongs to the MalT family. Monomer in solution. Oligomerizes to an active state in the presence of the positive effectors ATP and maltotriose.

Its activity is regulated as follows. Activated by ATP and maltotriose, which are both required for DNA binding. In terms of biological role, positively regulates the transcription of the maltose regulon whose gene products are responsible for uptake and catabolism of malto-oligosaccharides. Specifically binds to the promoter region of its target genes, recognizing a short DNA motif called the MalT box. The polypeptide is HTH-type transcriptional regulator MalT (Salmonella gallinarum (strain 287/91 / NCTC 13346)).